Reading from the N-terminus, the 91-residue chain is Putative regulatory protein CLB_2388 (91 aa).

It belongs to the RemA family.

The polypeptide is Putative regulatory protein CLB_2388 (Clostridium botulinum (strain ATCC 19397 / Type A)).